The following is a 249-amino-acid chain: Small ribosomal subunit protein uS3 (249 aa).

One can recognise a KH type-2 domain in the interval 39–109 (IRTYVLARLK…EVKIDVVEVV (71 aa)). Positions 226-239 (KERRNDAGARNRDS) are enriched in basic and acidic residues. The disordered stretch occupies residues 226-249 (KERRNDAGARNRDSRTKRRHRTKR). Basic residues predominate over residues 240 to 249 (RTKRRHRTKR).

The protein belongs to the universal ribosomal protein uS3 family. Part of the 30S ribosomal subunit. Forms a tight complex with proteins S10 and S14.

Binds the lower part of the 30S subunit head. Binds mRNA in the 70S ribosome, positioning it for translation. The chain is Small ribosomal subunit protein uS3 from Pelodictyon phaeoclathratiforme (strain DSM 5477 / BU-1).